The chain runs to 122 residues: AGEVEKREGMMKQIGGAMGSLAAISKGEKPFDADTVKAAVTTIGTNAKAFPEQFPAGTETGSAAAPAIWENFEDFKAKAAKLGTDADIVLANLPGDQAGVATAMKTLGADCGTCHQTYRLKK.

4 residues coordinate heme: methionine 11, cysteine 111, cysteine 114, and histidine 115. Heme c contacts are provided by methionine 11, cysteine 111, cysteine 114, and histidine 115.

In terms of assembly, monomer. In terms of processing, binds 1 heme c group covalently per subunit.

Its function is as follows. Low-spin monoheme cytochrome c. The protein is Cytochrome c-556 of Agrobacterium tumefaciens (strain B2A).